The sequence spans 132 residues: Small ribosomal subunit protein uS8 (132 aa).

Belongs to the universal ribosomal protein uS8 family. Part of the 30S ribosomal subunit. Contacts proteins S5 and S12.

Functionally, one of the primary rRNA binding proteins, it binds directly to 16S rRNA central domain where it helps coordinate assembly of the platform of the 30S subunit. The protein is Small ribosomal subunit protein uS8 of Mycoplasmopsis pulmonis (strain UAB CTIP) (Mycoplasma pulmonis).